The following is a 398-amino-acid chain: 1,4-beta-D-glucan cellobiohydrolase CEL6C (398 aa).

An N-terminal signal peptide occupies residues 1–18; the sequence is MKITSSAAALALVASAVA. A glycan (N-linked (GlcNAc...) asparagine) is linked at Asn-70. Residue Asp-125 is part of the active site. The active-site Proton donor is the Asp-170. Substrate-binding residues include Trp-218, Trp-318, Lys-346, and Glu-350.

It belongs to the glycosyl hydrolase 6 (cellulase B) family. Post-translationally, both N- and O-glycosylated.

The protein resides in the secreted. It carries out the reaction Hydrolysis of (1-&gt;4)-beta-D-glucosidic linkages in cellulose and cellotetraose, releasing cellobiose from the non-reducing ends of the chains.. In terms of biological role, exoglucanase that plays an important function in biomass degradation by catalyzing the hydrolysis of the non-reducing end beta-1,4-glucosidic linkages in cellulose and cellotetraose to release cellobiose. Hydrolyzes crystalline and amorphous cellulose but is inactive on hydroxyethyl cellulose, mannan, galactomannan, xyloglucan, arabinoxylan, arabinan, xylan, and pectin. In Podospora anserina (strain S / ATCC MYA-4624 / DSM 980 / FGSC 10383) (Pleurage anserina), this protein is 1,4-beta-D-glucan cellobiohydrolase CEL6C.